The chain runs to 108 residues: Replication restart protein PriB (108 aa).

The SSB domain maps to 8–108; sequence IDNRFSVMGV…LHAEQIEFID (101 aa).

The protein belongs to the PriB family. As to quaternary structure, homodimer. Interacts with PriA and DnaT. Component of the replication restart primosome. Primosome assembly occurs via a 'hand-off' mechanism. PriA binds to replication forks, subsequently PriB then DnaT bind; DnaT then displaces ssDNA to generate the helicase loading substrate.

In terms of biological role, involved in the restart of stalled replication forks, which reloads the replicative helicase on sites other than the origin of replication; the PriA-PriB pathway is the major replication restart pathway. During primosome assembly it facilitates complex formation between PriA and DnaT on DNA; stabilizes PriA on DNA. Stimulates the DNA unwinding activity of PriA helicase. This Haemophilus influenzae (strain 86-028NP) protein is Replication restart protein PriB.